A 350-amino-acid polypeptide reads, in one-letter code: MDAIAARALSVVRACVTVTDARVSLDPGVMETLGIAINRYNGLTNHSVSMRPQTQAERNEMFFMCTDMVLAALNVQIGNISPDYDQALATVGALATTEIPYNVQAMNDIVRITGQMQTFGPSKVQTGPYAGAVEVQQSGRYYVPQGRTRGGYINSNIAEVCMDAGAAGQVNALLAPRRGDAVMIYFVWRPLRIFCDPQGASLESAPGTFVTVDGVNVAAGDVVAWNTIAPVNVGNPGARRSILQFEVLWYTSLDRSLDTVPELAPTLTRCYAYVSPTWHALRAVIFQQMNMQPINPPIFPPTERNEIVAYLLLVASLADVYAALRPDFRMNGVVAPVGQINRALVLAAYH.

N-linked (GlcNAc...) asparagine; by host glycosylation occurs at asparagine 45.

It belongs to the orbivirus VP7 family. In terms of assembly, homotrimer.

The protein localises to the virion. Its function is as follows. Major structural core protein; binds to structural protein VP3. Constitutes the surface of the AHSV core. This African horse sickness virus (AHSV) protein is Core protein VP7 (Segment-7).